Reading from the N-terminus, the 274-residue chain is NADPH-dependent 7-cyano-7-deazaguanine reductase (274 aa).

81-83 lines the substrate pocket; it reads IES. 83–84 contributes to the NADPH binding site; the sequence is SK. The Thioimide intermediate role is filled by Cys182. The active-site Proton donor is the Asp189. 221 to 222 contacts substrate; that stretch reads HE. 250–251 is a binding site for NADPH; it reads RG.

This sequence belongs to the GTP cyclohydrolase I family. QueF type 2 subfamily. Homodimer.

It is found in the cytoplasm. It carries out the reaction 7-aminomethyl-7-carbaguanine + 2 NADP(+) = 7-cyano-7-deazaguanine + 2 NADPH + 3 H(+). It functions in the pathway tRNA modification; tRNA-queuosine biosynthesis. Catalyzes the NADPH-dependent reduction of 7-cyano-7-deazaguanine (preQ0) to 7-aminomethyl-7-deazaguanine (preQ1). In Hahella chejuensis (strain KCTC 2396), this protein is NADPH-dependent 7-cyano-7-deazaguanine reductase.